Reading from the N-terminus, the 177-residue chain is Large ribosomal subunit protein uL6 (177 aa).

The protein belongs to the universal ribosomal protein uL6 family. As to quaternary structure, part of the 50S ribosomal subunit.

Its function is as follows. This protein binds to the 23S rRNA, and is important in its secondary structure. It is located near the subunit interface in the base of the L7/L12 stalk, and near the tRNA binding site of the peptidyltransferase center. The protein is Large ribosomal subunit protein uL6 of Klebsiella pneumoniae (strain 342).